The chain runs to 541 residues: Kinesin light chain 1 (541 aa).

The stretch at 27–156 forms a coiled coil; sequence KTKQVIQGLE…HLEFMNQLKK (130 aa). The span at 156–176 shows a compositional bias: basic and acidic residues; it reads KYDDDISPSEDKDSDSSKEPL. Residues 156-201 are disordered; sequence KYDDDISPSEDKDSDSSKEPLDDLFPNDEDEPGQGIQHSDSSAAAA. A Phosphoserine modification is found at Ser-162. 5 TPR repeats span residues 211 to 244, 253 to 286, 295 to 328, 337 to 370, and 380 to 413; these read LRTLHNLVIQYASQGRYEVAVPSCKQALEDLEKT, ATMLNILALVYRDQNKYKDAANLLNDALAIREKT, AATLNNLAVLYGKRGKYKEAEPLCKRALEIREKV, AKQLNNLALLCQNQGKYEEVEYYYQRALGIYQTK, and AKTKNNLASCYLKQGKFKQAETLYKEILTRAHEA. Tyr-448 carries the post-translational modification Phosphotyrosine. Ser-459 carries the phosphoserine modification. One copy of the TPR 6 repeat lies at 463–496; it reads TTTLKNLGALYRRQGKFEAAETLEEAAMRSRKQG. Residues 493–541 are disordered; it reads RKQGLDNVHKQRVAEVLNDPESMEKRRSRESLNMDVVKYESGPDGGEEA. Composition is skewed to basic and acidic residues over residues 495 to 505 and 514 to 524; these read QGLDNVHKQRV and SMEKRRSRESL. Ser-520 and Ser-523 each carry phosphoserine; by AMPK.

Belongs to the kinesin light chain family. In terms of assembly, oligomeric complex composed of two heavy chains and two light chains. Interacts with SPAG9. Interacts with ATCAY; may link mitochondria to KLC1 and regulate mitochondria localization into neuron projections. Interacts (via TPR repeats) with TOR1A; the interaction associates TOR1A with the kinesin oligomeric complex. Interacts with BORCS5. Interacts with MAPK8IP3/JIP3 and NTRK2/TRKB; interaction with NTRK2/TRKB is mediated by MAPK8IP3/JIP3. Interacts with CLSTN1; phosphorylation at Ser-459 inhibits interaction with CLSTN1. Phosphorylation at Ser-459 by ERK inhibits interaction with CLSTN1 and localization to cytoplasmic vesicles.

It is found in the cell projection. It localises to the growth cone. Its subcellular location is the cytoplasmic vesicle. The protein localises to the cytoplasm. The protein resides in the cytoskeleton. Kinesin is a microtubule-associated force-producing protein that may play a role in organelle transport. The light chain may function in coupling of cargo to the heavy chain or in the modulation of its ATPase activity. The sequence is that of Kinesin light chain 1 (Klc1) from Mus musculus (Mouse).